The sequence spans 449 residues: Probable phosphoglucosamine mutase (449 aa).

Ser-101 acts as the Phosphoserine intermediate in catalysis. The Mg(2+) site is built by Ser-101, Asp-239, Asp-241, and Asp-243. Position 101 is a phosphoserine (Ser-101).

It belongs to the phosphohexose mutase family. Mg(2+) serves as cofactor. Activated by phosphorylation.

The enzyme catalyses alpha-D-glucosamine 1-phosphate = D-glucosamine 6-phosphate. Functionally, catalyzes the conversion of glucosamine-6-phosphate to glucosamine-1-phosphate. This Methanothermobacter thermautotrophicus (strain ATCC 29096 / DSM 1053 / JCM 10044 / NBRC 100330 / Delta H) (Methanobacterium thermoautotrophicum) protein is Probable phosphoglucosamine mutase.